The following is a 411-amino-acid chain: Arginase (411 aa).

Residues 83 to 106 are disordered; that stretch reads NNYINNNDNNNDNNNDNNNDNNNN. Residues histidine 193, aspartate 216, histidine 218, and aspartate 220 each contribute to the Mn(2+) site. L-arginine contacts are provided by asparagine 222, serine 229, and aspartate 274. Aspartate 323 and aspartate 325 together coordinate Mn(2+).

The protein belongs to the arginase family. Homotrimer; oligomerization is dependent on Mn(2+) binding. The cofactor is Mn(2+).

It catalyses the reaction L-arginine + H2O = urea + L-ornithine. It participates in nitrogen metabolism; urea cycle; L-ornithine and urea from L-arginine: step 1/1. With respect to regulation, feedback inhibition by product L-ornithine,. Inhibited by 2(S)-amino-6-boronohexanoic acid (ABH); however, with less efficiency than human ARG1. Its function is as follows. Catalyzes the hydrolysis of L-arginine into urea and L-ornithine, which is a precursor for polyamine biosynthesis. May play a role in parasite intra-hepatic development during the host liver stage. The protein is Arginase of Plasmodium falciparum (isolate 3D7).